A 192-amino-acid chain; its full sequence is Nucleoside triphosphate pyrophosphatase (192 aa).

The Proton acceptor role is filled by Asp73.

It belongs to the Maf family. A divalent metal cation serves as cofactor.

The protein resides in the cytoplasm. It catalyses the reaction a ribonucleoside 5'-triphosphate + H2O = a ribonucleoside 5'-phosphate + diphosphate + H(+). The catalysed reaction is a 2'-deoxyribonucleoside 5'-triphosphate + H2O = a 2'-deoxyribonucleoside 5'-phosphate + diphosphate + H(+). Its function is as follows. Nucleoside triphosphate pyrophosphatase. May have a dual role in cell division arrest and in preventing the incorporation of modified nucleotides into cellular nucleic acids. The sequence is that of Nucleoside triphosphate pyrophosphatase from Ehrlichia ruminantium (strain Gardel).